The chain runs to 630 residues: Kelch-like protein 14 (630 aa).

The BTB domain maps to Cys33–Leu153. The disordered stretch occupies residues Gly69–Leu117. Over residues Gln84–Gln96 the composition is skewed to low complexity. The BACK domain maps to Val212–Gln281. Kelch repeat units follow at residues Met325 to Asn374, Phe375 to Lys426, His427 to Gly473, Ile475 to Asp520, Leu522 to Asp572, and Ile574 to Leu622.

Interacts with TOR1A. As to expression, expressed in the brain, primarily in neurons. In the cerebral cortex, mostly expressed in layers I and II (at protein level). Also observed in some neurons of the corpus striatum (at protein level). Expressed at high levels in the hippocampus, including in pyramidal cells of the CA1 and CA3 layers (at protein level). In the cerebellum, expression in Purkinje cells is higher than in granular cells (at protein level). Also detected in the medial septum, ventral pallidum, thalamus, hypothalamus, amygdala, inferior colliculi, locus caeruleus, peripyramidal nucleus, raphe nucleus, reticular formation, spinal trigeminal nucleus, and vestibular nuclei (at protein level). Low expression, if any, in glial cells (at protein level). Not observed in the corpus callosum.

It localises to the cytoplasm. The protein resides in the cytosol. Its subcellular location is the endoplasmic reticulum membrane. The sequence is that of Kelch-like protein 14 (Klhl14) from Mus musculus (Mouse).